The chain runs to 217 residues: Uridylate kinase (217 aa).

Position 6-10 (6-10 (KLSGR)) interacts with ATP. G38 provides a ligand contact to UMP. 2 residues coordinate ATP: G39 and R43. UMP-binding positions include D60 and 107 to 113 (FQPGQST). ATP is bound by residues N134, Y139, and D142.

Belongs to the UMP kinase family. Homohexamer.

It is found in the cytoplasm. It carries out the reaction UMP + ATP = UDP + ADP. It participates in pyrimidine metabolism; CTP biosynthesis via de novo pathway; UDP from UMP (UMPK route): step 1/1. Inhibited by UTP. In terms of biological role, catalyzes the reversible phosphorylation of UMP to UDP. The sequence is that of Uridylate kinase from Pyrobaculum aerophilum (strain ATCC 51768 / DSM 7523 / JCM 9630 / CIP 104966 / NBRC 100827 / IM2).